A 286-amino-acid chain; its full sequence is Deleted in azoospermia-like-A (286 aa).

An RRM domain is found at 33–114; the sequence is NTVFVGGIDI…PAIRKICTYV (82 aa). In terms of domain architecture, DAZ spans 155 to 180; the sequence is ACPYPSSPPMAIQQIPVGCQQPGYFQ.

This sequence belongs to the RRM DAZ family. As to quaternary structure, interacts with the C-terminus of pabp1 and with epabp. Prior to oocyte maturation, found in a complex with epabp and pum2 proteins and spdy1 mRNA; pum2 dissociates from the complex during maturation. In terms of tissue distribution, germ-line specific. Oocyte mRNA expression is first restricted to the granulo-fibrillar material (GFM) of the mitochondrial cloud and then to the oocyte germ plasm at the vegetal cortex. Remains an mRNA component of the germ plasm until the neurula stage. In 2-8 cell embryos, expressed in the germ plasm matrix between germinal granules and mitochondria. Expressed in primordial germ cells (PGCs) later in embryogenesis. In addition to the ovaries of adult females, expressed in the testis of adult and juvenile males in spermatogonia and spermatocytes. The protein is restricted to the embryonic germ plasm and primordial germ cells.

The protein resides in the cytoplasm. Its function is as follows. RNA-binding protein that is required for primordial germ cell (PGC) differentiation and indirectly necessary for the migration of PGCs through the endoderm. May promote meiotic cell division during spermatogenesis. Shows a preference for G- and U-rich RNAs and probably binds the 3'-UTR of target mRNAs. Stimulates the initiation of translation of mRNAs through the recruitment of poly(A)-binding proteins (PABPs). This is Deleted in azoospermia-like-A (dazl-a) from Xenopus laevis (African clawed frog).